Consider the following 65-residue polypeptide: Omega-lycotoxin-Am1f (65 aa).

A propeptide spanning residues 1 to 18 (GDEEDEVEETLPVAEEGR) is cleaved from the precursor. 4 disulfide bridges follow: Cys-22-Cys-37, Cys-29-Cys-42, Cys-36-Cys-62, and Cys-44-Cys-60.

This sequence belongs to the neurotoxin omega-lctx family. In terms of tissue distribution, expressed by the venom gland.

It is found in the secreted. Functionally, modulates Cav2.1/CACNA1A voltage-gated calcium channels (P/Q-type currents) in rat cerebellar Purkinje cells and hippocampal CA1-CA3 neurons. At saturating concentrations (&gt;10 nM) decelerates activation kinetics and slightly increases peak amplitude without affecting deactivation kinetics. In vivo, does not cause death when intravenously injected into mice. In rat models, through its activity on Cav2.1/CACNA1A, has an ameliorative effect on memory defects provoked by hyperstimulation of N-methyl-D-aspartate receptors (NMDARs) in the hippocampus. The polypeptide is Omega-lycotoxin-Am1f (Alopecosa marikovskyi (Wolf spider)).